Here is a 160-residue protein sequence, read N- to C-terminus: Small ribosomal subunit protein bS6 (160 aa).

The protein belongs to the bacterial ribosomal protein bS6 family.

In terms of biological role, binds together with bS18 to 16S ribosomal RNA. In Ureaplasma urealyticum serovar 10 (strain ATCC 33699 / Western), this protein is Small ribosomal subunit protein bS6.